Here is a 394-residue protein sequence, read N- to C-terminus: Elongation factor Tu 2 (394 aa).

The tr-type G domain maps to 10-204 (KPHVNVGTIG…ALDNYIPEPE (195 aa)). The segment at 19 to 26 (GHVDHGKT) is G1. 19–26 (GHVDHGKT) serves as a coordination point for GTP. Thr-26 is a binding site for Mg(2+). The segment at 60–64 (GITIS) is G2. The tract at residues 81 to 84 (DCPG) is G3. GTP contacts are provided by residues 81–85 (DCPGH) and 136–139 (NKCD). The G4 stretch occupies residues 136 to 139 (NKCD). A G5 region spans residues 174-176 (SAL).

Belongs to the TRAFAC class translation factor GTPase superfamily. Classic translation factor GTPase family. EF-Tu/EF-1A subfamily. In terms of assembly, monomer.

Its subcellular location is the cytoplasm. It catalyses the reaction GTP + H2O = GDP + phosphate + H(+). GTP hydrolase that promotes the GTP-dependent binding of aminoacyl-tRNA to the A-site of ribosomes during protein biosynthesis. The chain is Elongation factor Tu 2 from Photobacterium profundum (strain SS9).